We begin with the raw amino-acid sequence, 181 residues long: MSANENNLIWIDLEMTGLDPERDRIIEIATLVTDANLNILAEGPTIAVHQSDEQLALMDDWNVRTHTASGLVERVKASTMGDREAELATLEFLKQWVPAGKSPICGNSIGQDRRFLFKYMPELEAYFHYRYLDVSTLKELARRWKPEILDGFTKQGTHQAMDDIRESVAELAYYREHFIKL.

An Exonuclease domain is found at 8-171 (LIWIDLEMTG…DDIRESVAEL (164 aa)). The active site involves Tyr129.

The protein belongs to the oligoribonuclease family. In terms of assembly, homodimer.

Its subcellular location is the cytoplasm. 3'-to-5' exoribonuclease specific for small oligoribonucleotides. This Escherichia coli O139:H28 (strain E24377A / ETEC) protein is Oligoribonuclease.